The sequence spans 1079 residues: DNA ligase 4 (1079 aa).

A disordered region spans residues 1 to 20; it reads MAVHAPYNHAPPPTQEINGQ. ATP is bound by residues Glu-295, Lys-297, Leu-298, Arg-302, Glu-357, Phe-395, Glu-460, Lys-465, Lys-482, and Lys-484. Lys-297 functions as the N6-AMP-lysine intermediate in the catalytic mechanism. Position 357 (Glu-357) interacts with Mg(2+). Glu-460 contacts Mg(2+). In terms of domain architecture, BRCT 1 spans 699–789; sequence VETSIFSDMT…TALPFLKEFL (91 aa). Positions 838–847 are enriched in acidic residues; it reads DGEDKDEIDV. Residues 838–942 form a disordered region; the sequence is DGEDKDEIDV…SDVGVNGDDY (105 aa). Basic and acidic residues-rich tracts occupy residues 848-878 and 900-914; these read EESRESKNRRMAREDLKEKESNRTLEQKKLQ and MSLKEESDTDSERSR. A BRCT 2 domain is found at 968 to 1078; the sequence is DEDRIFYHLA…TLLDEDLYKP (111 aa).

The protein belongs to the ATP-dependent DNA ligase family. Mg(2+) is required as a cofactor.

Its subcellular location is the nucleus. It catalyses the reaction ATP + (deoxyribonucleotide)n-3'-hydroxyl + 5'-phospho-(deoxyribonucleotide)m = (deoxyribonucleotide)n+m + AMP + diphosphate.. Functionally, DNA ligase involved in DNA non-homologous end joining (NHEJ); required for double-strand break (DSB) repair. The polypeptide is DNA ligase 4 (LIG4) (Cryptococcus neoformans var. neoformans serotype D (strain JEC21 / ATCC MYA-565) (Filobasidiella neoformans)).